Here is a 269-residue protein sequence, read N- to C-terminus: Cytochrome c oxidase subunit 3 (269 aa).

The Mitochondrial matrix portion of the chain corresponds to 1–22; the sequence is MTHLERSRHQQHPFHMVMPSPW. A helical membrane pass occupies residues 23–41; sequence PIVVSFALLSLALSTALTM. Over 42–48 the chain is Mitochondrial intermembrane; it reads HGYIGNM. A helical transmembrane segment spans residues 49–73; the sequence is NMVYLALFVLLTSSILWFRDIVAEA. Topologically, residues 74 to 80 are mitochondrial matrix; it reads TYLGDHT. Residues 81–114 form a helical membrane-spanning segment; the sequence is MAVRKGINLGFLMFVLSEVLIFAGLFWAYFHSAM. At 115–137 the chain is on the mitochondrial intermembrane side; the sequence is SPDVTLGACWPPVGIEAVQPTEL. A helical membrane pass occupies residues 138–161; it reads PLLNTIILLSSGATVTYSHHALIA. Over 162–164 the chain is Mitochondrial matrix; that stretch reads GNR. A helical membrane pass occupies residues 165-188; sequence NKALSGLLITFWLIVIFVTCQYIE. The Mitochondrial intermembrane segment spans residues 189-201; it reads YTNAAFTISDGVY. A helical membrane pass occupies residues 202-230; the sequence is GSVFYAGTGLHFLHMVMLAAMLGVNYWRM. The Mitochondrial matrix portion of the chain corresponds to 231–248; sequence RNYHLTAGHHVGYETTII. A helical transmembrane segment spans residues 249–265; the sequence is YTHVLDVIWLFLYVVFY. At 266 to 269 the chain is on the mitochondrial intermembrane side; that stretch reads WWGV.

Belongs to the cytochrome c oxidase subunit 3 family. Component of the cytochrome c oxidase (complex IV, CIV), a multisubunit enzyme composed of 12 subunits. The complex is composed of a catalytic core of 3 subunits COX1, COX2 and COX3, encoded in the mitochondrial DNA, and 9 supernumerary subunits COX4, COX5A (or COX5B), COX6, COX7, COX8, COX9, COX12, COX13 and COX26, which are encoded in the nuclear genome. The complex exists as a monomer or a dimer and forms supercomplexes (SCs) in the inner mitochondrial membrane with a dimer of ubiquinol-cytochrome c oxidoreductase (cytochrome b-c1 complex, complex III, CIII), resulting in 2 different assemblies (supercomplexes III(2)IV and III(2)IV(2)). The N-terminus is blocked.

Its subcellular location is the mitochondrion inner membrane. The enzyme catalyses 4 Fe(II)-[cytochrome c] + O2 + 8 H(+)(in) = 4 Fe(III)-[cytochrome c] + 2 H2O + 4 H(+)(out). In terms of biological role, component of the cytochrome c oxidase, the last enzyme in the mitochondrial electron transport chain which drives oxidative phosphorylation. The respiratory chain contains 3 multisubunit complexes succinate dehydrogenase (complex II, CII), ubiquinol-cytochrome c oxidoreductase (cytochrome b-c1 complex, complex III, CIII) and cytochrome c oxidase (complex IV, CIV), that cooperate to transfer electrons derived from NADH and succinate to molecular oxygen, creating an electrochemical gradient over the inner membrane that drives transmembrane transport and the ATP synthase. Cytochrome c oxidase is the component of the respiratory chain that catalyzes the reduction of oxygen to water. Electrons originating from reduced cytochrome c in the intermembrane space (IMS) are transferred via the dinuclear copper A center (CU(A)) of COX2 and heme A of COX1 to the active site in COX1, a binuclear center (BNC) formed by heme A3 and copper B (CU(B)). The BNC reduces molecular oxygen to 2 water molecules using 4 electrons from cytochrome c in the IMS and 4 protons from the mitochondrial matrix. COX3 is a catalytic core subunit. The sequence is that of Cytochrome c oxidase subunit 3 (COX3) from Saccharomyces cerevisiae (strain ATCC 204508 / S288c) (Baker's yeast).